The sequence spans 184 residues: Shikimate kinase (184 aa).

Gly-20–Arg-25 provides a ligand contact to ATP. Residue Ser-24 coordinates Mg(2+). Substrate contacts are provided by Asp-42, Arg-66, and Gly-88. Arg-127 contributes to the ATP binding site. Arg-146 contacts substrate. Residue Arg-162 coordinates ATP.

This sequence belongs to the shikimate kinase family. In terms of assembly, monomer. Requires Mg(2+) as cofactor.

Its subcellular location is the cytoplasm. It carries out the reaction shikimate + ATP = 3-phosphoshikimate + ADP + H(+). Its pathway is metabolic intermediate biosynthesis; chorismate biosynthesis; chorismate from D-erythrose 4-phosphate and phosphoenolpyruvate: step 5/7. Functionally, catalyzes the specific phosphorylation of the 3-hydroxyl group of shikimic acid using ATP as a cosubstrate. In Thermus thermophilus (strain ATCC BAA-163 / DSM 7039 / HB27), this protein is Shikimate kinase.